The chain runs to 197 residues: Cell division protein SepF (197 aa).

A disordered region spans residues 15-91 (DEEEVESPEE…PPSKSNGKNV (77 aa)). Over residues 22–31 (PEERQRRVVQ) the composition is skewed to basic and acidic residues. The segment covering 37–47 (TNNVQQNQPQQ) has biased composition (low complexity). Polar residues-rich tracts occupy residues 48–58 (SERSYSNQSKL) and 78–91 (RMNQ…GKNV).

The protein belongs to the SepF family. As to quaternary structure, homodimer. Interacts with FtsZ.

Its subcellular location is the cytoplasm. Its function is as follows. Cell division protein that is part of the divisome complex and is recruited early to the Z-ring. Probably stimulates Z-ring formation, perhaps through the cross-linking of FtsZ protofilaments. Its function overlaps with FtsA. The polypeptide is Cell division protein SepF (Staphylococcus haemolyticus (strain JCSC1435)).